Consider the following 129-residue polypeptide: Glycine cleavage system H protein (129 aa).

The region spanning 24 to 106 is the Lipoyl-binding domain; that stretch reads SYTVGITEHA…YGEGWFFRVM (83 aa). The residue at position 65 (Lys65) is an N6-lipoyllysine.

This sequence belongs to the GcvH family. In terms of assembly, the glycine cleavage system is composed of four proteins: P, T, L and H. It depends on (R)-lipoate as a cofactor.

Its function is as follows. The glycine cleavage system catalyzes the degradation of glycine. The H protein shuttles the methylamine group of glycine from the P protein to the T protein. This chain is Glycine cleavage system H protein, found in Shewanella sp. (strain MR-7).